A 273-amino-acid polypeptide reads, in one-letter code: Torsin-1A (273 aa).

Residues 45-205 (KPKKPLTLSL…VSVFNNKNSG (161 aa)) form an interaction with SNAPIN region. 56-63 (GWTGTGKN) is an ATP binding site. Residues asparagine 97 and asparagine 112 are each glycosylated (N-linked (GlcNAc...) asparagine).

This sequence belongs to the ClpA/ClpB family. Torsin subfamily. As to quaternary structure, homohexamer. Interacts with TOR1B; the interaction may be specific of neural tissues. Interacts (ATP-bound) with TOR1AIP1 and TOR1AIP2; the interactions induce ATPase activity. Interacts with KLHL14; preferentially when ATP-free. Interacts with KLC1 (via TPR repeats); the interaction associates TOR1A with the kinesin oligomeric complex. Interacts with COPS4; the interaction associates TOR1A with the CSN complex. Interacts with SNAPIN; the interaction is direct and associates SNAPIN with the CSN complex. Interacts with STON2. Interacts (ATP-bound) with SYNE3 (via KASH domain); the interaction is required for SYNE3 nuclear envelope localization. Interacts with VIM; the interaction associates TOR1A with the cytoskeleton. Interacts with PLEC. Interacts (ATP-bound) with SLC6A3; regulates SLC6A3 transport to the plasma membrane. In terms of processing, N-glycosylated.

The protein localises to the endoplasmic reticulum lumen. It localises to the nucleus membrane. Its subcellular location is the cell projection. It is found in the growth cone. The protein resides in the cytoplasmic vesicle membrane. The protein localises to the synapse. It localises to the synaptosome. Its subcellular location is the cytoplasm. It is found in the cytoskeleton. The enzyme catalyses ATP + H2O = ADP + phosphate + H(+). In terms of biological role, protein with chaperone functions important for the control of protein folding, processing, stability and localization as well as for the reduction of misfolded protein aggregates. Involved in the regulation of synaptic vesicle recycling, controls STON2 protein stability in collaboration with the COP9 signalosome complex (CSN). In the nucleus, may link the cytoskeleton with the nuclear envelope, this mechanism seems to be crucial for the control of nuclear polarity, cell movement and, specifically in neurons, nuclear envelope integrity. Participates in the cellular trafficking and may regulate the subcellular location of multipass membrane proteins such as the dopamine transporter SLC6A3, leading to the modulation of dopamine neurotransmission. In the endoplasmic reticulum, plays a role in the quality control of protein folding by increasing clearance of misfolded proteins such as SGCE variants or holding them in an intermediate state for proper refolding. May have a redundant function with TOR1B in non-neural tissues. The polypeptide is Torsin-1A (TOR1A) (Cricetus cricetus (Black-bellied hamster)).